The following is a 127-amino-acid chain: Cyclin-dependent protein kinase inhibitor SIM (127 aa).

The tract at residues 21-71 (RANTNRDDDGGGCTTPTSSDHKIPPTTATTPPPPPQKPRPPSTPSSLGIRS) is disordered. The segment covering 50–63 (TPPPPPQKPRPPST) has biased composition (pro residues).

In terms of assembly, interacts with CDKA-1. Interacts with CYCD2-1, CYCD3-2 and CYCD4-1. Interacts with CDKB1-1. Interacts with CPR5. In terms of tissue distribution, expressed in the shoot apical meristem, leaf primordia and the elongation zone of the root.

Its subcellular location is the nucleus. Functionally, cyclin-dependent protein kinase (CDK) inhibitor that functions as a repressor of mitosis in the endoreduplication cell cycle. Inhibits the kinase activity of CYCD3-1/CDKA-1, CYCD2-1/CDKA-1 and CYCB1-1/CDKB1-1 complexes in a dose dependent manner. Cooperates with SMR1 and SMR2 to promote endoreplication during leaf development. Required for normal trichome endoreplicating cell cycles. Positive regulator of effector-triggered immunity (ETI). The protein is Cyclin-dependent protein kinase inhibitor SIM of Arabidopsis thaliana (Mouse-ear cress).